Reading from the N-terminus, the 501-residue chain is Glycerol kinase (501 aa).

Thr-12 contributes to the ADP binding site. 3 residues coordinate ATP: Thr-12, Thr-13, and Ser-14. Thr-12 lines the sn-glycerol 3-phosphate pocket. Arg-16 contributes to the ADP binding site. Arg-82, Glu-83, Tyr-135, and Asp-244 together coordinate sn-glycerol 3-phosphate. Glycerol-binding residues include Arg-82, Glu-83, Tyr-135, Asp-244, and Gln-245. ADP contacts are provided by Thr-266, Gly-309, Gly-409, and Asn-413. 3 residues coordinate ATP: Thr-266, Gly-309, and Gly-409.

It belongs to the FGGY kinase family.

The enzyme catalyses glycerol + ATP = sn-glycerol 3-phosphate + ADP + H(+). It participates in polyol metabolism; glycerol degradation via glycerol kinase pathway; sn-glycerol 3-phosphate from glycerol: step 1/1. Its activity is regulated as follows. Inhibited by fructose 1,6-bisphosphate (FBP). In terms of biological role, key enzyme in the regulation of glycerol uptake and metabolism. Catalyzes the phosphorylation of glycerol to yield sn-glycerol 3-phosphate. The polypeptide is Glycerol kinase (Coxiella burnetii (strain Dugway 5J108-111)).